A 539-amino-acid chain; its full sequence is MVVNLCLPQFRPRIHCNKVSADGYEVENLISEDLIKRSHGFRTEYFIRPPIYVTVSFPFNVEICRVNIDLTTGGYQNVSGLELYTSALSSRVSQDAQDCWTTGPVETSVPDKEAFTLVGKVLLKNQNHVVFSHRGFKARPPFSPMEVTLLSPAVVAQELWNKGALSLSHVAHLKIGITHVTGSGISCIKRLEVWGQPARTCSQEVINSVLLIASESLPQDLDLHAPALPMESDCDPGGQSESQHSPCTLQDMSEVESDVPEEFLDPITLEIMPCPMLLPSGKVIDQSTLEKCNLSEAAWGRVPSDPFTGLAFTPQSQPLPHPSLKARIDRFLLQHSISGCRLLGRAQTPSAMTPSVITLPSRKRKTEQAEHSSHYSLGMSASSSATSPLFSPTTSEPTAKKMKATSELGLTDMDCSAGPVSHEQKLAQSLEIALTSTLGSMPSFTARLTKGQLQLGTRGSSACRRPASSSEHPRSVSGPECASCKQAFSSYSTNEPVYQLPCGHLLCRPCLSEKQRSQPMMCTACRQPVTSQDVLRVHF.

The segment at 226-249 is disordered; it reads PALPMESDCDPGGQSESQHSPCTL. Over residues 239–249 the composition is skewed to polar residues; the sequence is QSESQHSPCTL. The U-box domain occupies 258 to 338; sequence DVPEEFLDPI…DRFLLQHSIS (81 aa). Disordered stretches follow at residues 359-399 and 456-479; these read LPSR…EPTA and GTRG…VSGP. Residues 374 to 395 show a composition bias toward low complexity; that stretch reads HYSLGMSASSSATSPLFSPTTS. The RING-type zinc-finger motif lies at 481-526; that stretch reads CASCKQAFSSYSTNEPVYQLPCGHLLCRPCLSEKQRSQPMMCTACR.

In terms of assembly, interacts with UBE2L3. Interacts with VCP. In terms of tissue distribution, expressed in testis and placenta.

Its subcellular location is the nucleus. It carries out the reaction S-ubiquitinyl-[E2 ubiquitin-conjugating enzyme]-L-cysteine + [acceptor protein]-L-lysine = [E2 ubiquitin-conjugating enzyme]-L-cysteine + N(6)-ubiquitinyl-[acceptor protein]-L-lysine.. The protein operates within protein modification; protein ubiquitination. Its function is as follows. May have a ubiquitin-protein ligase activity acting as an E3 ubiquitin-protein ligase or as a ubiquitin-ubiquitin ligase promoting elongation of ubiquitin chains on substrates. The protein is RING finger protein 37 (Ubox5) of Mus musculus (Mouse).